Here is a 224-residue protein sequence, read N- to C-terminus: DNA repair and recombination protein RadB (224 aa).

It belongs to the eukaryotic RecA-like protein family. RadB subfamily.

Involved in DNA repair and in homologous recombination. May regulate the cleavage reactions of the branch-structured DNA. Has a very weak ATPase activity that is not stimulated by DNA. Binds DNA but does not promote DNA strands exchange. This Methanoculleus marisnigri (strain ATCC 35101 / DSM 1498 / JR1) protein is DNA repair and recombination protein RadB.